A 488-amino-acid chain; its full sequence is NADH-quinone oxidoreductase subunit N 2 (488 aa).

14 helical membrane-spanning segments follow: residues 18-38 (FLPE…ELFI), 45-65 (LVLN…LLIP), 81-101 (PLAV…LPFA), 110-130 (SFYG…FVLA), 135-155 (LIIL…LTAL), 169-189 (YLIL…FMYI), 210-230 (LVLG…AVPF), 242-262 (PTPV…IPLV), 274-294 (LVWT…GNLV), 308-328 (SSIA…VIGM), 331-351 (VIYF…VLAL), 375-395 (IAFA…TVGF), 412-434 (WLAF…LVVV), and 458-478 (FALT…WFLI).

The protein belongs to the complex I subunit 2 family. As to quaternary structure, NDH-1 is composed of 14 different subunits. Subunits NuoA, H, J, K, L, M, N constitute the membrane sector of the complex.

Its subcellular location is the cell inner membrane. The enzyme catalyses a quinone + NADH + 5 H(+)(in) = a quinol + NAD(+) + 4 H(+)(out). Its function is as follows. NDH-1 shuttles electrons from NADH, via FMN and iron-sulfur (Fe-S) centers, to quinones in the respiratory chain. The immediate electron acceptor for the enzyme in this species is believed to be ubiquinone. Couples the redox reaction to proton translocation (for every two electrons transferred, four hydrogen ions are translocated across the cytoplasmic membrane), and thus conserves the redox energy in a proton gradient. This is NADH-quinone oxidoreductase subunit N 2 from Aquifex aeolicus (strain VF5).